The sequence spans 498 residues: Probable malate:quinone oxidoreductase 2 (498 aa).

Belongs to the MQO family. It depends on FAD as a cofactor.

The catalysed reaction is (S)-malate + a quinone = a quinol + oxaloacetate. It participates in carbohydrate metabolism; tricarboxylic acid cycle; oxaloacetate from (S)-malate (quinone route): step 1/1. This Staphylococcus aureus (strain COL) protein is Probable malate:quinone oxidoreductase 2.